The primary structure comprises 483 residues: Coagulation factor X isoform 1 (483 aa).

The signal sequence occupies residues 1-20 (MAPQLLLCLILTFLWSLPEA). The propeptide occupies 21–40 (ESNVFLKSKVANRFLQRTKR). The Gla domain occupies 41–86 (ANSLFEEFKSGNIERECIEERCSKEEAREAFEDDEKTETFWNVYVD). A 4-carboxyglutamate mark is found at Glu46, Glu47, Glu54, Glu56, Glu59, Glu60, Glu65, Glu66, Glu69, Glu72, and Glu75. The cysteines at positions 57 and 62 are disulfide-linked. The EGF-like 1; calcium-binding domain occupies 86–122 (DGDQCSSNPCHYGGTCKDGIGSYTCTCLSGYEGKNCE). 11 disulfides stabilise this stretch: Cys90-Cys101, Cys95-Cys110, Cys112-Cys121, Cys129-Cys140, Cys136-Cys149, Cys151-Cys164, Cys172-Cys345, Cys245-Cys250, Cys265-Cys281, Cys393-Cys407, and Cys418-Cys446. O-linked (Hex...) serine glycosylation occurs at Ser92. The residue at position 103 (Asp103) is a (3R)-3-hydroxyaspartate. The EGF-like 2 domain occupies 125 to 165 (LYKSCRVDNGDCWHFCKPVQNGIQCSCAESYLLGEDGHSCV). The propeptide at 183–238 (EANLPDFQTDFSDDYDEIDENNFVETPTNFSGLVLTVQSQNATLLKKSDNPSPDIR) is activation peptide. A Peptidase S1 domain is found at 239–470 (VVNGTDCKLG…FILWIKRIIR (232 aa)). The active-site Charge relay system is the His280. N-linked (GlcNAc...) asparagine glycosylation is present at Asn283. The active-site Charge relay system is Asp325. The active-site Charge relay system is Ser422.

This sequence belongs to the peptidase S1 family. In terms of assembly, heterodimer of a light chain and a heavy chain; disulfide-linked. In terms of processing, gamma-carboxyglutamate residues are formed by vitamin K dependent carboxylation. These residues are essential for the binding of calcium. The activation peptide is cleaved by factor IXa (in the intrinsic pathway), or by factor VIIa (in the extrinsic pathway). Post-translationally, the iron and 2-oxoglutarate dependent 3-hydroxylation of aspartate and asparagine is (R) stereospecific within EGF domains. In terms of tissue distribution, plasma; synthesized in the liver.

It localises to the secreted. The enzyme catalyses Selective cleavage of Arg-|-Thr and then Arg-|-Ile bonds in prothrombin to form thrombin.. Factor Xa is a vitamin K-dependent glycoprotein that converts prothrombin to thrombin in the presence of factor Va, calcium and phospholipid during blood clotting. This Pseudonaja textilis (Eastern brown snake) protein is Coagulation factor X isoform 1 (F10).